We begin with the raw amino-acid sequence, 647 residues long: Threonine--tRNA ligase (647 aa).

Positions 1-61 constitute a TGS domain; the sequence is MINITFPDGA…TEDGSIEIVT (61 aa). The segment at 242-540 is catalytic; sequence DHRKLGKELD…LIENYKGAFP (299 aa). Zn(2+) contacts are provided by Cys-336, His-387, and His-517.

Belongs to the class-II aminoacyl-tRNA synthetase family. In terms of assembly, homodimer. Requires Zn(2+) as cofactor.

It is found in the cytoplasm. It carries out the reaction tRNA(Thr) + L-threonine + ATP = L-threonyl-tRNA(Thr) + AMP + diphosphate + H(+). Its function is as follows. Catalyzes the attachment of threonine to tRNA(Thr) in a two-step reaction: L-threonine is first activated by ATP to form Thr-AMP and then transferred to the acceptor end of tRNA(Thr). Also edits incorrectly charged L-seryl-tRNA(Thr). The polypeptide is Threonine--tRNA ligase (Streptococcus pneumoniae (strain 70585)).